A 244-amino-acid polypeptide reads, in one-letter code: Protein DCG1 (244 aa).

It belongs to the HyuE racemase family.

The sequence is that of Protein DCG1 (DCG1) from Saccharomyces cerevisiae (strain ATCC 204508 / S288c) (Baker's yeast).